The primary structure comprises 418 residues: uncharacterized protein (418 aa).

This is an uncharacterized protein from Escherichia coli (strain K12).